Here is a 108-residue protein sequence, read N- to C-terminus: UPF0060 membrane protein YnfA (108 aa).

The Periplasmic portion of the chain corresponds to 1–5 (MLKTT). The helical transmembrane segment at 6-26 (LLFFVTALCEIIGCFLPWLWL) threads the bilayer. The Cytoplasmic segment spans residues 27 to 30 (KRGA). Residues 31-51 (SMWWLLPAAASLALFVWLLTL) form a helical membrane-spanning segment. Over 52 to 60 (HPAASGRVY) the chain is Periplasmic. Residues 61–81 (AAYGGVYVCTALLWLRVVDGV) form a helical membrane-spanning segment. Residues 82-84 (RLT) are Cytoplasmic-facing. The helical transmembrane segment at 85–105 (VYDWCGALIALCGMLIIVVGW) threads the bilayer. Residues 106–108 (GRT) lie on the Periplasmic side of the membrane.

This sequence belongs to the UPF0060 family.

It localises to the cell inner membrane. The protein is UPF0060 membrane protein YnfA of Salmonella schwarzengrund (strain CVM19633).